Consider the following 360-residue polypeptide: Peptide chain release factor 1 (360 aa).

Residue Q235 is modified to N5-methylglutamine.

It belongs to the prokaryotic/mitochondrial release factor family. Post-translationally, methylated by PrmC. Methylation increases the termination efficiency of RF1.

The protein resides in the cytoplasm. Functionally, peptide chain release factor 1 directs the termination of translation in response to the peptide chain termination codons UAG and UAA. This chain is Peptide chain release factor 1, found in Janthinobacterium sp. (strain Marseille) (Minibacterium massiliensis).